A 528-amino-acid chain; its full sequence is uncharacterized protein (528 aa).

Residues 1 to 51 form a disordered region; it reads MEHPKRPTPKNEALHIDASGRGESSFSVHRSHSGGHEPFAPSPGSSIGASV. A run of 2 repeats spans residues 185–213 and 285–313. The tract at residues 185–313 is 2 X 29 AA repeats; the sequence is EQEEEYISNS…EEKRKLQQAL (129 aa). Disordered stretches follow at residues 467 to 497 and 509 to 528; these read RAHG…NNDT and TVHP…DSHY. Over residues 472 to 496 the composition is skewed to polar residues; it reads SPPTVVVQPSTSRAGSNSTANINND.

This is an uncharacterized protein from Caenorhabditis elegans.